We begin with the raw amino-acid sequence, 61 residues long: Conotoxin Tx-D021 (61 aa).

The N-terminal stretch at 1–22 (MRCLPVFVILLLLIASTPSVDA) is a signal peptide. Residues 23–48 (RAKTRDDMSLASFHDDAKRILQILQD) constitute a propeptide that is removed on maturation. Cys60 bears the Cysteine amide mark.

The protein belongs to the conotoxin T superfamily. Post-translationally, contains 2 disulfide bonds that can be either 'C1-C3, C2-C4' or 'C1-C4, C2-C3', since these disulfide connectivities have been observed for conotoxins with cysteine framework V (for examples, see AC P0DQQ7 and AC P81755). In terms of tissue distribution, expressed by the venom duct.

It is found in the secreted. The protein is Conotoxin Tx-D021 of Conus textile (Cloth-of-gold cone).